A 273-amino-acid chain; its full sequence is Dermonecrotic toxin LvSicTox-alphaIC1ai (273 aa).

The active site involves His5. 2 residues coordinate Mg(2+): Glu25 and Asp27. Residue His41 is the Nucleophile of the active site. 2 disulfides stabilise this stretch: Cys45/Cys51 and Cys47/Cys190. Asp85 serves as a coordination point for Mg(2+).

Belongs to the arthropod phospholipase D family. Class II subfamily. Requires Mg(2+) as cofactor. As to expression, expressed by the venom gland.

The protein localises to the secreted. It catalyses the reaction an N-(acyl)-sphingosylphosphocholine = an N-(acyl)-sphingosyl-1,3-cyclic phosphate + choline. It carries out the reaction an N-(acyl)-sphingosylphosphoethanolamine = an N-(acyl)-sphingosyl-1,3-cyclic phosphate + ethanolamine. The enzyme catalyses a 1-acyl-sn-glycero-3-phosphocholine = a 1-acyl-sn-glycero-2,3-cyclic phosphate + choline. The catalysed reaction is a 1-acyl-sn-glycero-3-phosphoethanolamine = a 1-acyl-sn-glycero-2,3-cyclic phosphate + ethanolamine. Its function is as follows. Dermonecrotic toxins cleave the phosphodiester linkage between the phosphate and headgroup of certain phospholipids (sphingolipid and lysolipid substrates), forming an alcohol (often choline) and a cyclic phosphate. This toxin acts on sphingomyelin (SM). It may also act on ceramide phosphoethanolamine (CPE), lysophosphatidylcholine (LPC) and lysophosphatidylethanolamine (LPE), but not on lysophosphatidylserine (LPS), and lysophosphatidylglycerol (LPG). It acts by transphosphatidylation, releasing exclusively cyclic phosphate products as second products. Induces dermonecrosis, hemolysis, increased vascular permeability, edema, inflammatory response, and platelet aggregation. In Loxosceles variegata (Recluse spider), this protein is Dermonecrotic toxin LvSicTox-alphaIC1ai.